The sequence spans 324 residues: MGYCQDDQLVNKICDLYEKISKLETLKPCEDVDTLFKQLVSTCIPPNPNIDVTKMSENIQEMRSNLIKICGEAEGYLEHHFSSILTSFEDNPLHHLNLFPYYNNYLKLSKLEFDLLEQNLNGFVPRTVAFIGSGPLPLTSVVLASSHLKDSIFHNFDIDPSANMVAARLVSSDPDLSQRMFFHTVDIMDVTESLKGFDVVFLAALVGMDKKEKVKVVEHLEKHMSPGALLMLRSAHGPRAFLYPIVEPCDLEGFEVLSVYHPTDEVINSIVISRKLGEDANGVVHDHIDQASDLACNCSKIHVIMNKKKSIIEEFAGANEEQLT.

It belongs to the nicotianamine synthase (NAS)-like family.

It carries out the reaction 3 S-adenosyl-L-methionine = nicotianamine + 3 S-methyl-5'-thioadenosine + 3 H(+). Functionally, synthesizes nicotianamine, a polyamine which serves as a sensor for the physiological iron status within the plant, and/or might be involved in the transport of iron. The sequence is that of Probable nicotianamine synthase 4 (NAS4) from Arabidopsis thaliana (Mouse-ear cress).